A 550-amino-acid chain; its full sequence is Sterol O-acyltransferase 1 (550 aa).

The residue at position 1 (Met-1) is an N-acetylmethionine. A disordered region spans residues 1-36 (MVGEEKMSLRNRLSKSRENPEEDEDQRKPAKESLEA). Residues 1 to 138 (MVGEEKMSLR…LDELLEVDHI (138 aa)) are Cytoplasmic-facing. The residue at position 8 (Ser-8) is a Phosphoserine. Residues 15–34 (KSRENPEEDEDQRKPAKESL) are compositionally biased toward basic and acidic residues. His-137 lines the cholesterol pocket. A helical transmembrane segment spans residues 139–160 (RTIYHMFIALLILFILSTLVVD). Residues 161-180 (YIDEGRLVLEFSLLSYAFGK) are Lumenal-facing. The chain crosses the membrane as a helical span at residues 181 to 206 (FPTVVWTWWIMFLSTFSVPYFLFQRW). At 207 to 218 (ATGYSKSSHPLI) the chain is on the cytoplasmic side. A helical membrane pass occupies residues 219 to 244 (NSLFHGFLFMVFQIGILGFGPTYVVL). Residues 245–252 (AYTLPPAS) are Lumenal-facing. Residues 253 to 276 (RFIIIFEQIRFVMKAHSFVRENVP) form a helical membrane-spanning segment. Residues 277 to 319 (RVLNSAKEKSSTVPIPTVNQYLYFLFAPTLIYRDSYPRNPTVR) are Cytoplasmic-facing. Residues 320–352 (WGYVAMQFAQVFGCFFYVYYIFERLCAPLFRNI) traverse the membrane as a helical segment. Residues 353–369 (KQEPFSARVLVLCVFNS) lie on the Lumenal side of the membrane. The helical transmembrane segment at 370-395 (ILPGVLILFLTFFAFLHCWLNAFAEM) threads the bilayer. Topologically, residues 396–443 (LRFGDRMFYKDWWNSTSYSNYYRTWNVVVHDWLYYYAYKDFLWFFSKR) are cytoplasmic. Residues 403–409 (FYKDWWN) carry the FYXDWWN motif motif. Positions 415, 418, 421, 425, 433, 445, and 456 each coordinate an acyl-CoA. Residues 444-468 (FKSAAMLAVFAVSAVVHEYALAVCL) form a helical membrane-spanning segment. Residue His-460 is part of the active site. Residues 469-474 (SFFYPV) are Lumenal-facing. The helical transmembrane segment at 475–490 (LFVLFMFFGMAFNFIV) threads the bilayer. Topologically, residues 491–496 (NDSRKK) are cytoplasmic. Residues 497–528 (PIWNVMMWTSLFLGNGVLLCFYSQEWYARQHC) form a helical membrane-spanning segment. Residues Cys-528 and Cys-546 are joined by a disulfide bond. Residues 529–550 (PLKNPTFLDYVRPRSWTCRYVF) are Lumenal-facing.

This sequence belongs to the membrane-bound acyltransferase family. Sterol o-acyltransferase subfamily. May form homo- or heterodimers. Interacts with UBIAD1. In terms of tissue distribution, expressed in most tissues, but most strongly in the adrenal gland. Expressed more strongly in liver Kupffer cells than in hepatocytes.

It localises to the endoplasmic reticulum membrane. It carries out the reaction a sterol + a long-chain fatty acyl-CoA = a long-chain 3-hydroxysterol ester + CoA. The enzyme catalyses cholesterol + an acyl-CoA = a cholesterol ester + CoA. It catalyses the reaction cholesterol + (9Z)-octadecenoyl-CoA = cholesteryl (9Z-octadecenoate) + CoA. The catalysed reaction is cholesterol + hexadecanoyl-CoA = cholesteryl hexadecanoate + CoA. It carries out the reaction octadecanoyl-CoA + cholesterol = cholesteryl octadecanoate + CoA. The enzyme catalyses (9Z,12Z)-octadecadienoyl-CoA + cholesterol = cholesteryl (9Z,12Z)-octadecadienoate + CoA. It catalyses the reaction (5Z,8Z,11Z,14Z)-eicosatetraenoyl-CoA + cholesterol = cholesteryl (5Z,8Z,11Z,14Z)-eicosatetraenoate + CoA. The catalysed reaction is (9Z)-hexadecenoyl-CoA + cholesterol = cholesteryl (9Z)-hexadecenoate + CoA. It carries out the reaction (11Z)-octadecenoyl-CoA + cholesterol = cholesteryl (11Z)-octadecenoate + CoA. The enzyme catalyses (7Z)-octadecenoyl-CoA + cholesterol = cholesteryl (7Z)-octadecenoate + CoA. Functionally, catalyzes the formation of fatty acid-cholesterol esters, which are less soluble in membranes than cholesterol. Plays a role in lipoprotein assembly and dietary cholesterol absorption. Preferentially utilizes oleoyl-CoA ((9Z)-octadecenoyl-CoA) as a substrate: shows a higher activity towards an acyl-CoA substrate with a double bond at the delta-9 position (9Z) than towards saturated acyl-CoA or an unsaturated acyl-CoA with a double bond at the delta-7 (7Z) or delta-11 (11Z) positions. The polypeptide is Sterol O-acyltransferase 1 (SOAT1) (Chlorocebus aethiops (Green monkey)).